Consider the following 382-residue polypeptide: Cytoplasmic tRNA 2-thiolation protein 2 (382 aa).

Belongs to the CTU2/NCS2 family.

The protein localises to the cytoplasm. It functions in the pathway tRNA modification; 5-methoxycarbonylmethyl-2-thiouridine-tRNA biosynthesis. Functionally, plays a central role in 2-thiolation of mcm(5)S(2)U at tRNA wobble positions of tRNA(Lys), tRNA(Glu) and tRNA(Gln). May act by forming a heterodimer with NCS6 that ligates sulfur from thiocarboxylated URM1 onto the uridine of tRNAs at wobble position. Prior mcm(5) tRNA modification by the elongator complex is required for 2-thiolation. May also be involved in protein urmylation. The polypeptide is Cytoplasmic tRNA 2-thiolation protein 2 (Phaeosphaeria nodorum (strain SN15 / ATCC MYA-4574 / FGSC 10173) (Glume blotch fungus)).